Consider the following 1490-residue polypeptide: ABC transporter CDR4 (1490 aa).

The segment covering 1 to 12 has biased composition (polar residues); sequence MADADTSSNSSK. Disordered stretches follow at residues 1 to 26 and 53 to 75; these read MADA…GTYQ and LKRQ…LSGK. Residues 1–516 lie on the Cytoplasmic side of the membrane; the sequence is MADADTSSNS…NILRIKGNPS (516 aa). Residues 58–67 show a composition bias toward basic and acidic residues; sequence SRQESQKSNE. The region spanning 151–407 is the ABC transporter 1 domain; the sequence is PKYLSLFFRE…FIDMGYECPQ (257 aa). The next 6 membrane-spanning stretches (helical) occupy residues 517–537, 551–571, 601–621, 626–646, 659–679, and 767–787; these read IHLF…SIFY, AALF…IFSL, LPTK…MVNF, GNFF…SHIF, AMTP…FVIP, and FGIV…LCEI. Residues 788 to 1182 lie on the Cytoplasmic side of the membrane; sequence NKGAMQKGEI…VFEQNWRTPS (395 aa). Residues 846–1090 form the ABC transporter 2 domain; it reads FFWRDLTYQV…LINYFEKYGA (245 aa). Position 882-889 (882-889) interacts with ATP; that stretch reads GASGAGKT. Transmembrane regions (helical) follow at residues 1183 to 1203, 1217 to 1237, and 1268 to 1288; these read YLYS…FSFY, FSVF…LPTF, and IPWN…PVGL. The N-linked (GlcNAc...) asparagine glycan is linked to asparagine 1291. Helical transmembrane passes span 1304–1324, 1333–1353, and 1370–1390; these read FMWF…QLCI, AANL…VLVT, and FTYL…VTCA. Asparagine 1424 carries an N-linked (GlcNAc...) asparagine glycan. Residues 1455-1475 form a helical membrane-spanning segment; it reads IGIYIAFIGINIIGTFILYWF.

This sequence belongs to the ABC transporter superfamily. ABCG family. PDR (TC 3.A.1.205) subfamily.

It localises to the membrane. The chain is ABC transporter CDR4 (CDR4) from Candida albicans (Yeast).